The sequence spans 118 residues: Large ribosomal subunit protein uL22 (118 aa).

This sequence belongs to the universal ribosomal protein uL22 family. In terms of assembly, part of the 50S ribosomal subunit.

In terms of biological role, this protein binds specifically to 23S rRNA; its binding is stimulated by other ribosomal proteins, e.g. L4, L17, and L20. It is important during the early stages of 50S assembly. It makes multiple contacts with different domains of the 23S rRNA in the assembled 50S subunit and ribosome. The globular domain of the protein is located near the polypeptide exit tunnel on the outside of the subunit, while an extended beta-hairpin is found that lines the wall of the exit tunnel in the center of the 70S ribosome. This is Large ribosomal subunit protein uL22 from Treponema denticola (strain ATCC 35405 / DSM 14222 / CIP 103919 / JCM 8153 / KCTC 15104).